Here is a 488-residue protein sequence, read N- to C-terminus: Fumarate hydratase (488 aa).

5 residues coordinate (S)-malate: serine 105, serine 147, asparagine 148, threonine 194, and histidine 195. Histidine 195 (proton donor/acceptor) is an active-site residue. Serine 340 is a catalytic residue. (S)-malate-binding residues include serine 341, lysine 346, and asparagine 348.

The protein belongs to the class-II fumarase/aspartase family. Fumarase subfamily. In terms of assembly, homotetramer.

The protein localises to the cytoplasm. It is found in the cytosol. It carries out the reaction (S)-malate = fumarate + H2O. Functionally, catalyzes the reversible stereospecific interconversion of fumarate to L-malate. Fumarate metabolism in the cytosol plays a role during urea cycle and arginine metabolism; fumarate being a by-product of the urea cycle and amino-acid catabolism. This chain is Fumarate hydratase, found in Schistosoma mansoni (Blood fluke).